Here is a 222-residue protein sequence, read N- to C-terminus: Extracellular protein ARB_03106 (222 aa).

Positions 1-18 are cleaved as a signal peptide; sequence MRLHSVLAVATAVGCAVA. 2 N-linked (GlcNAc...) asparagine glycosylation sites follow: Asn-113 and Asn-126.

It is found in the secreted. This is Extracellular protein ARB_03106 from Arthroderma benhamiae (strain ATCC MYA-4681 / CBS 112371) (Trichophyton mentagrophytes).